A 264-amino-acid polypeptide reads, in one-letter code: Acetylglutamate kinase (264 aa).

Substrate contacts are provided by residues 50 to 51 (GG), Arg72, and Asn164.

This sequence belongs to the acetylglutamate kinase family. ArgB subfamily.

The protein resides in the cytoplasm. The catalysed reaction is N-acetyl-L-glutamate + ATP = N-acetyl-L-glutamyl 5-phosphate + ADP. It functions in the pathway amino-acid biosynthesis; L-arginine biosynthesis; N(2)-acetyl-L-ornithine from L-glutamate: step 2/4. Catalyzes the ATP-dependent phosphorylation of N-acetyl-L-glutamate. This is Acetylglutamate kinase from Moritella profunda.